The following is a 172-amino-acid chain: Ribosome maturation factor RimM (172 aa).

One can recognise a PRC barrel domain in the interval 99–171; it reads DDIPTWNYFI…LLTVEVPDGL (73 aa).

This sequence belongs to the RimM family. As to quaternary structure, binds ribosomal protein uS19.

Its subcellular location is the cytoplasm. An accessory protein needed during the final step in the assembly of 30S ribosomal subunit, possibly for assembly of the head region. Essential for efficient processing of 16S rRNA. May be needed both before and after RbfA during the maturation of 16S rRNA. It has affinity for free ribosomal 30S subunits but not for 70S ribosomes. This is Ribosome maturation factor RimM from Phocaeicola vulgatus (strain ATCC 8482 / DSM 1447 / JCM 5826 / CCUG 4940 / NBRC 14291 / NCTC 11154) (Bacteroides vulgatus).